The sequence spans 636 residues: Sodium-dependent multivitamin transporter (636 aa).

Transmembrane regions (helical) follow at residues 24-44, 68-88, 101-121, 143-163, 176-196, 199-219, 256-276, 297-317, 336-356, 404-424, 428-448, and 456-476; these read FSLVDYVVFSLLLVFSLAIGL, CLPVALSLLATFQSAVAILGV, FLGCCYFLGLLIPAHVFIPVF, ICGTVTFIFQMVIYMGVVLYA, LWLSVLTLGIVCTIYTALGGL, VIWTDVFQTLVMFLGQLAVII, FWTLAFGGVFMMLSLYGVNQA, VFPCQQVALSMGCLIGLVMFA, FVLYFVMDLLKGLPGLPGLFV, FGYGLLCLGMAYISSQMGPVL, ISIFGMVGGPLLGLFCLGMFF, and AIVGLLAGLIMAFWIGIGSIV. Residues Asn489 and Asn498 are each glycosylated (N-linked (GlcNAc...) asparagine). Residues 528–548 traverse the membrane as a helical segment; the sequence is LWYSAHNSTTVIVVGLIVSLL. The segment at 606-627 is disordered; sequence LRASGDKEPMTEASPVHQGTSP.

The protein belongs to the sodium:solute symporter (SSF) (TC 2.A.21) family. In terms of assembly, interacts with PDZD11.

It is found in the cell membrane. It localises to the apical cell membrane. It catalyses the reaction biotin(out) + 2 Na(+)(out) = biotin(in) + 2 Na(+)(in). The enzyme catalyses (R)-pantothenate(out) + 2 Na(+)(out) = (R)-pantothenate(in) + 2 Na(+)(in). It carries out the reaction (R)-lipoate(out) + 2 Na(+)(out) = (R)-lipoate(in) + 2 Na(+)(in). The catalysed reaction is iodide(out) + 2 Na(+)(out) = iodide(in) + 2 Na(+)(in). Sodium-dependent multivitamin transporter that mediates the electrogenic transport of pantothenate, biotin, lipoate and iodide. Functions as a Na(+)-coupled substrate symporter where the stoichiometry of Na(+):substrate is 2:1, creating an electrochemical Na(+) gradient used as driving force for substrate uptake. Required for biotin and pantothenate uptake in the intestine across the brush border membrane. Plays a role in the maintenance of intestinal mucosa integrity, by providing the gut mucosa with biotin. Contributes to the luminal uptake of biotin and pantothenate into the brain across the blood-brain barrier. This chain is Sodium-dependent multivitamin transporter (SLC5A6), found in Oryctolagus cuniculus (Rabbit).